A 547-amino-acid polypeptide reads, in one-letter code: Chaperonin GroEL (547 aa).

Residues 30–33 (TLGP), K51, 87–91 (DGTTT), G415, 479–481 (NAA), and D495 each bind ATP.

It belongs to the chaperonin (HSP60) family. In terms of assembly, forms a cylinder of 14 subunits composed of two heptameric rings stacked back-to-back. Interacts with the co-chaperonin GroES.

The protein localises to the cytoplasm. It carries out the reaction ATP + H2O + a folded polypeptide = ADP + phosphate + an unfolded polypeptide.. In terms of biological role, together with its co-chaperonin GroES, plays an essential role in assisting protein folding. The GroEL-GroES system forms a nano-cage that allows encapsulation of the non-native substrate proteins and provides a physical environment optimized to promote and accelerate protein folding. This chain is Chaperonin GroEL, found in Delftia acidovorans (strain DSM 14801 / SPH-1).